The following is a 314-amino-acid chain: L-lactate dehydrogenase 2 (314 aa).

NAD(+)-binding positions include V16, D37, K42, Y68, and 82–83 (GL). Residues Q85, R91, and 123-126 (NPVD) each bind substrate. Residues 121-123 (ATN) and S146 each bind NAD(+). 151 to 154 (DSAR) is a substrate binding site. R156 and H171 together coordinate beta-D-fructose 1,6-bisphosphate. H178 acts as the Proton acceptor in catalysis. Y223 is subject to Phosphotyrosine. Substrate is bound at residue T232.

This sequence belongs to the LDH/MDH superfamily. LDH family. Homotetramer.

The protein resides in the cytoplasm. The catalysed reaction is (S)-lactate + NAD(+) = pyruvate + NADH + H(+). It participates in fermentation; pyruvate fermentation to lactate; (S)-lactate from pyruvate: step 1/1. With respect to regulation, allosterically activated by fructose 1,6-bisphosphate (FBP). In terms of biological role, catalyzes the conversion of lactate to pyruvate. The protein is L-lactate dehydrogenase 2 of Bacillus cereus (strain ATCC 14579 / DSM 31 / CCUG 7414 / JCM 2152 / NBRC 15305 / NCIMB 9373 / NCTC 2599 / NRRL B-3711).